Reading from the N-terminus, the 306-residue chain is UDP-N-acetylenolpyruvoylglucosamine reductase (306 aa).

The region spanning 34-198 (VGGPADLLIT…LEVTFKLHNS (165 aa)) is the FAD-binding PCMH-type domain. Arginine 177 is an active-site residue. The active-site Proton donor is serine 227. Glutamate 297 is an active-site residue.

Belongs to the MurB family. FAD serves as cofactor.

It is found in the cytoplasm. The catalysed reaction is UDP-N-acetyl-alpha-D-muramate + NADP(+) = UDP-N-acetyl-3-O-(1-carboxyvinyl)-alpha-D-glucosamine + NADPH + H(+). It participates in cell wall biogenesis; peptidoglycan biosynthesis. In terms of biological role, cell wall formation. The chain is UDP-N-acetylenolpyruvoylglucosamine reductase from Clostridium botulinum (strain ATCC 19397 / Type A).